We begin with the raw amino-acid sequence, 1041 residues long: FHIP family protein GF15501 (1041 aa).

2 disordered regions span residues 797–856 (RKGN…NKRR) and 907–987 (SNSS…SEPV). Residue Ser803 is modified to Phosphoserine. Low complexity predominate over residues 808–824 (NLQQQQALNPAQQQGQQ). 2 stretches are compositionally biased toward polar residues: residues 825–843 (RSAYATLSAATPVQATPTS) and 907–933 (SNSSSESRGFAPGQQSAGTCETSLSTQ). Over residues 942–973 (SGSSSNSSMGGSSQTLSAHSNATTTHSSSTLH) the composition is skewed to low complexity.

It belongs to the FHIP family.

This chain is FHIP family protein GF15501, found in Drosophila ananassae (Fruit fly).